Consider the following 408-residue polypeptide: Putative transporter AmpG 2 (408 aa).

The next 12 membrane-spanning stretches (helical) occupy residues 10–30 (YISN…IYLL), 49–69 (IGLF…GPLL), 84–104 (YCLI…TNFN), 109–129 (FIPF…YDML), 154–174 (FRIG…IISW), 177–197 (VYRS…IYPL), 224–244 (WLII…LSIM), 261–281 (LGYK…GGFL), 294–311 (ALIY…LYFY), 315–337 (ITSL…SPFF), 353–373 (IALI…ISGY), and 378–398 (LGWT…YILI).

This sequence belongs to the major facilitator superfamily.

The protein localises to the cell inner membrane. This is Putative transporter AmpG 2 (ampG2) from Rickettsia felis (strain ATCC VR-1525 / URRWXCal2) (Rickettsia azadi).